The following is a 917-amino-acid chain: MSDGNERNQDGNNTPSQGGEQTRSSRLSLRPAGRQEVGRTVDAGSVRQSFSHGRSKVVQVEVRKPKRNAAGPGAGAAARGGRAGGRALTAAELAARQRALELQRKAAAEEAARREEEKIQIMSAAEAARRAAEEERLISEQKAAEIAALKESEQQAAREQAAAEAAARAAEQAAAEAAAREAEEAARSAPLDPRSHSTGGVQLAAPVQRLRPLAERAIMPPRPVQPSRPAAAAPARNNETLHLRSGAAAGGDDERRPAPRRSGPGAPPAPPRRPSAPSRKGGGSDRRSGRIDVRAAIEGDDDKTRSLASVRRQRDRERRQAELERLRSDQVRVVRDVIVPETITVAELANRMAARQGEVIKALMKMGVMATAAQSIDGDTAELVVEEFGHRIKRVSESDVEIGIEGVEDNADDLKPRAPVVTVMGHVDHGKTSLLDALRTTDVAASEAGGITQHIGAYQITAPSGKKITFIDTPGHEAFTSMRARGASVTDIVVLVVAADDGVMPQTIEAIKHAKAANAPIIVAINKIDKPGANPNRVRQELLNHEIVVEEMGGDTQDVEVSALKRIGLDKLEECILLQSEMLDLKANPDRVAEGVVIESRLDRGRGPVAALLVQKGTLRRGDIVVAGAEWGRVRAVLDDRGRQVKEAGPSMPVEVLGLTGVPGAGEPFVVVENDARAREISEFRQRKIKEKEAASQVAARGTLDQMLARIQAGVQKEVALLIKADVQGSAEAISTTVQKLAHEEVAVRVLNASVGQITESDIQLAKASDAIIVAFNVRATTQARELAQREGVDIRYYSIIYQVADDVEQLVKGKVAPKHREKFLGYAEVRQVFNITKTGKVAGCYVTEGLVKRGCGVRLLRDNVVIHEGELSQLKRFKDDVKEVARGYECGLSFAGYNDLREGDMVECYEMEVIPA.

Disordered stretches follow at residues 1 to 84 (MSDG…GRAG) and 150 to 318 (KESE…DRER). Positions 10-27 (DGNNTPSQGGEQTRSSRL) are enriched in polar residues. 3 stretches are compositionally biased toward low complexity: residues 69–84 (AAGP…GRAG), 154–177 (QQAA…AAEA), and 227–236 (SRPAAAAPAR). Residues 265 to 274 (GAPPAPPRRP) show a composition bias toward pro residues. The span at 282–305 (GGSDRRSGRIDVRAAIEGDDDKTR) shows a compositional bias: basic and acidic residues. Positions 416–586 (PRAPVVTVMG…LLQSEMLDLK (171 aa)) constitute a tr-type G domain. The interval 425 to 432 (GHVDHGKT) is G1. GTP is bound at residue 425 to 432 (GHVDHGKT). The interval 450 to 454 (GITQH) is G2. A G3 region spans residues 472–475 (DTPG). GTP contacts are provided by residues 472–476 (DTPGH) and 526–529 (NKID). The G4 stretch occupies residues 526 to 529 (NKID). The tract at residues 562 to 564 (SAL) is G5.

Belongs to the TRAFAC class translation factor GTPase superfamily. Classic translation factor GTPase family. IF-2 subfamily.

The protein localises to the cytoplasm. In terms of biological role, one of the essential components for the initiation of protein synthesis. Protects formylmethionyl-tRNA from spontaneous hydrolysis and promotes its binding to the 30S ribosomal subunits. Also involved in the hydrolysis of GTP during the formation of the 70S ribosomal complex. This is Translation initiation factor IF-2 from Gluconobacter oxydans (strain 621H) (Gluconobacter suboxydans).